The sequence spans 120 residues: QVQLLQPGTELVKPGASVNLSCKASGYTFTSYWMHWIRQRPGQGLEWIGGINPSNGGTNYNEKFKSKATLTVDKSSSATYMQLSTPTSEDSAVYYCARWDYEGDRYFDVWGTGTTVTVSS.

The segment at 1–98 is v segment; the sequence is QVQLLQPGTE…EDSAVYYCAR (98 aa). Cys22 and Cys96 are oxidised to a cystine. The interval 99–105 is d segment; the sequence is WDYEGDR. Residues 106 to 120 form a j segment region; that stretch reads YFDVWGTGTTVTVSS.

The chain is Ig heavy chain V region AC38 15.3 from Mus musculus (Mouse).